Reading from the N-terminus, the 256-residue chain is Omega-amidase YafV (256 aa).

Positions 4 to 234 constitute a CN hydrolase domain; it reads LKITLLQQPL…ATRIDAELSM (231 aa). Glu42 acts as the Proton acceptor in catalysis. Residue Lys107 is part of the active site. Cys141 (nucleophile) is an active-site residue.

Belongs to the carbon-nitrogen hydrolase superfamily. NIT1/NIT2 family.

The enzyme catalyses a monoamide of a dicarboxylate + H2O = a dicarboxylate + NH4(+). Functionally, hydrolyzes alpha-ketoglutaramate (a-KGM) to alpha-ketoglutarate (alpha-KG) and ammonia (specific activity 6.65 umol/min/mg), has weak activity on L-glutamine, almost no activity on deaminated glutathione (dGSH) and none on glutathione. May function as a metabolite repair enzyme. In Escherichia coli (strain B / BL21-DE3), this protein is Omega-amidase YafV (yafV).